The following is a 362-amino-acid chain: 3-dehydroquinate synthase (362 aa).

NAD(+) is bound by residues 71–76 (DGEQYK), 105–109 (GVVGD), 129–130 (TT), lysine 142, lysine 151, and 169–172 (CLKT). Glutamate 184, histidine 247, and histidine 264 together coordinate Zn(2+).

Belongs to the sugar phosphate cyclases superfamily. Dehydroquinate synthase family. It depends on NAD(+) as a cofactor. The cofactor is Co(2+). Zn(2+) is required as a cofactor.

The protein resides in the cytoplasm. The enzyme catalyses 7-phospho-2-dehydro-3-deoxy-D-arabino-heptonate = 3-dehydroquinate + phosphate. The protein operates within metabolic intermediate biosynthesis; chorismate biosynthesis; chorismate from D-erythrose 4-phosphate and phosphoenolpyruvate: step 2/7. Its function is as follows. Catalyzes the conversion of 3-deoxy-D-arabino-heptulosonate 7-phosphate (DAHP) to dehydroquinate (DHQ). The polypeptide is 3-dehydroquinate synthase (Escherichia coli O157:H7).